We begin with the raw amino-acid sequence, 748 residues long: Protein REPRESSOR OF SILENCING 3 (748 aa).

In terms of domain architecture, RRM spans 10–86 (VRLHVGGLGE…GRLRLEKAKE (77 aa)). Disordered stretches follow at residues 244–318 (KSIL…QSID), 350–531 (GSSK…VSDT), 579–600 (VDEEEAGKGPLKASNKSTGGSS), and 729–748 (EWAKAKKALSEPRRKKNSEE). Positions 266-288 (THPSKNRQTISLEETGRQESSQA) are enriched in polar residues. Residues 294–314 (KPSEVVPDKSSDEPSRTKDLE) are compositionally biased toward basic and acidic residues. The span at 373–382 (LKKKTKRKRV) shows a compositional bias: basic residues. Composition is skewed to acidic residues over residues 403–416 (DTMADDIERDDSDA), 439–472 (DDSDAVEDDTAIDSMADDPASDSVAESDDGDAVE), and 491–518 (ESDDGDNVEDDTAIDSMCDDTANDDVGS). Residues 520-531 (DSGSLADTVSDT) show a composition bias toward polar residues.

As to expression, ubiquitously expressed.

Its subcellular location is the nucleus. The protein localises to the nucleolus. It is found in the nucleoplasm. Its function is as follows. RNA-binding protein required for DNA demethylation and to eluviate siRNA-mediated transcriptional gene silencing (TGS), probably by guiding ROS1. Can bind specifically single stranded G-rich RNAs of 21-, 24- or 26-nt corresponding to promoter sequence of target genes; this interaction directs demethylation of target sequences. In Arabidopsis thaliana (Mouse-ear cress), this protein is Protein REPRESSOR OF SILENCING 3.